A 187-amino-acid polypeptide reads, in one-letter code: Threonylcarbamoyl-AMP synthase (187 aa).

The YrdC-like domain occupies 3 to 187 (EVLPADVAEL…AKSGQVIRKG (185 aa)).

Belongs to the SUA5 family. TsaC subfamily.

Its subcellular location is the cytoplasm. The enzyme catalyses L-threonine + hydrogencarbonate + ATP = L-threonylcarbamoyladenylate + diphosphate + H2O. Functionally, required for the formation of a threonylcarbamoyl group on adenosine at position 37 (t(6)A37) in tRNAs that read codons beginning with adenine. Catalyzes the conversion of L-threonine, HCO(3)(-)/CO(2) and ATP to give threonylcarbamoyl-AMP (TC-AMP) as the acyladenylate intermediate, with the release of diphosphate. This chain is Threonylcarbamoyl-AMP synthase, found in Shewanella halifaxensis (strain HAW-EB4).